Consider the following 1098-residue polypeptide: PAN2-PAN3 deadenylation complex catalytic subunit PAN2 (1098 aa).

WD repeat units follow at residues 19–58, 150–190, 253–293, and 300–338; these read ASKD…PFQL, TGFD…SVKS, PFPN…KLNV, and PASP…NFVN. Residues 340-466 form a linker region; it reads PAPLEEQDIP…SIFHLKSPTS (127 aa). The segment at 417-442 is disordered; the sequence is RNISQPYQSLREPPGSNSNAPRFISE. The USP domain occupies 466 to 839; the sequence is SVPHCYSRLQ…KPVIIVYSEP (374 aa). The region spanning 894 to 1067 is the Exonuclease domain; sequence IAIDAEFVVS…EDAYTALMLF (174 aa). 4 residues coordinate a divalent metal cation: Asp-897, Glu-899, Asp-1006, and Asp-1059.

Belongs to the peptidase C19 family. PAN2 subfamily. As to quaternary structure, forms a heterotrimer with an asymmetric homodimer of the regulatory subunit PAN3 to form the poly(A)-nuclease (PAN) deadenylation complex. The cofactor is a divalent metal cation.

It localises to the cytoplasm. It catalyses the reaction Exonucleolytic cleavage of poly(A) to 5'-AMP.. With respect to regulation, positively regulated by the regulatory subunit PAN3. Functionally, catalytic subunit of the poly(A)-nuclease (PAN) deadenylation complex, one of two cytoplasmic mRNA deadenylases involved in mRNA turnover. PAN specifically shortens poly(A) tails of RNA and the activity is stimulated by poly(A)-binding protein PAB1. PAN deadenylation is followed by rapid degradation of the shortened mRNA tails by the CCR4-NOT complex. Deadenylated mRNAs are then degraded by two alternative mechanisms, namely exosome-mediated 3'-5' exonucleolytic degradation, or deadenylation-dependent mRNA decaping and subsequent 5'-3' exonucleolytic degradation by XRN1. May also be involved in post-transcriptional maturation of mRNA poly(A) tails. This chain is PAN2-PAN3 deadenylation complex catalytic subunit PAN2, found in Meyerozyma guilliermondii (strain ATCC 6260 / CBS 566 / DSM 6381 / JCM 1539 / NBRC 10279 / NRRL Y-324) (Yeast).